Consider the following 349-residue polypeptide: tRNA pseudouridine synthase D (349 aa).

Substrate is bound at residue F26. Catalysis depends on D79, which acts as the Nucleophile. N128 is a binding site for substrate. A TRUD domain is found at 154–302 (GVPNYFGEQR…VEGCRRAILV (149 aa)). F328 serves as a coordination point for substrate.

The protein belongs to the pseudouridine synthase TruD family.

It carries out the reaction uridine(13) in tRNA = pseudouridine(13) in tRNA. Functionally, responsible for synthesis of pseudouridine from uracil-13 in transfer RNAs. The chain is tRNA pseudouridine synthase D from Photorhabdus laumondii subsp. laumondii (strain DSM 15139 / CIP 105565 / TT01) (Photorhabdus luminescens subsp. laumondii).